We begin with the raw amino-acid sequence, 450 residues long: Glucose-6-phosphate isomerase (450 aa).

Residue E290 is the Proton donor of the active site. Active-site residues include H311 and K425.

It belongs to the GPI family.

Its subcellular location is the cytoplasm. It carries out the reaction alpha-D-glucose 6-phosphate = beta-D-fructose 6-phosphate. It participates in carbohydrate biosynthesis; gluconeogenesis. It functions in the pathway carbohydrate degradation; glycolysis; D-glyceraldehyde 3-phosphate and glycerone phosphate from D-glucose: step 2/4. Its function is as follows. Catalyzes the reversible isomerization of glucose-6-phosphate to fructose-6-phosphate. This Leuconostoc mesenteroides subsp. mesenteroides (strain ATCC 8293 / DSM 20343 / BCRC 11652 / CCM 1803 / JCM 6124 / NCDO 523 / NBRC 100496 / NCIMB 8023 / NCTC 12954 / NRRL B-1118 / 37Y) protein is Glucose-6-phosphate isomerase.